We begin with the raw amino-acid sequence, 1115 residues long: Lateral signaling target protein 2 homolog (1115 aa).

4 disordered regions span residues 308-488 (PLGS…DSDS), 545-586 (SEDD…PSTS), 600-742 (RLPS…SLSD), and 879-1027 (VQSS…PDGK). A compositionally biased stretch (low complexity) spans 322-361 (NNSSSTTNTSNNNNNNTNNNNSSSGSDCTNNDKTGTTTNT). Residues 363 to 373 (KPVERLVDHRN) show a composition bias toward basic and acidic residues. Composition is skewed to low complexity over residues 374–417 (NNTT…TPTA) and 425–444 (PSHS…NSPA). A compositionally biased stretch (acidic residues) spans 449 to 488 (YDDDDEDDDDDDVHADVEEDEDESGILDSDEHDLNDDSDS). 2 stretches are compositionally biased toward low complexity: residues 558–577 (QQQQ…QQQQ) and 600–614 (RLPS…SSNN). Phosphoserine occurs at positions 603 and 604. Polar residues predominate over residues 615–628 (QQMTIKSPSEQTTT). Residues 632 to 655 (SNRHRHHSHHHHHHHHSHHHHHHQ) are compositionally biased toward basic residues. Residues 658–676 (AAVAVAAAQDEQHNNNQPH) are compositionally biased toward low complexity. The segment covering 677–706 (SHSHSSSHHHHHNHQSHSHPHRANRSTRKR) has biased composition (basic residues). 3 stretches are compositionally biased toward low complexity: residues 714-726 (TITT…GGEQ), 733-742 (DSSTASSLSD), and 881-901 (SSNS…AARS). Ser908 is modified (phosphoserine). Composition is skewed to low complexity over residues 921–975 (QQQQ…SPVS) and 988–1020 (TTTT…MSPP). The segment at 1025 to 1085 (DGKAPRCMSC…VCRECFMREV (61 aa)) adopts an FYVE-type zinc-finger fold. Residues Cys1031, Cys1034, Cys1047, Cys1050, Cys1055, Cys1058, Cys1077, and Cys1080 each coordinate Zn(2+). Residues 1088–1115 (SHSHGQSQSQIHSPTQQAGGRPQAASAS) form a disordered region. Residues 1090–1100 (SHGQSQSQIHS) are compositionally biased toward low complexity.

This sequence belongs to the lst-2 family.

Negative regulator of epidermal growth factor receptor (EGFR) signaling. This is Lateral signaling target protein 2 homolog from Drosophila grimshawi (Hawaiian fruit fly).